A 355-amino-acid chain; its full sequence is Methylthioribose-1-phosphate isomerase (355 aa).

Residues 52–54 (RGA), arginine 95, and glutamine 204 each bind substrate. Aspartate 245 acts as the Proton donor in catalysis. 255–256 (NK) is a binding site for substrate.

The protein belongs to the eIF-2B alpha/beta/delta subunits family. MtnA subfamily.

The catalysed reaction is 5-(methylsulfanyl)-alpha-D-ribose 1-phosphate = 5-(methylsulfanyl)-D-ribulose 1-phosphate. It participates in amino-acid biosynthesis; L-methionine biosynthesis via salvage pathway; L-methionine from S-methyl-5-thio-alpha-D-ribose 1-phosphate: step 1/6. Functionally, catalyzes the interconversion of methylthioribose-1-phosphate (MTR-1-P) into methylthioribulose-1-phosphate (MTRu-1-P). The sequence is that of Methylthioribose-1-phosphate isomerase from Acaryochloris marina (strain MBIC 11017).